A 192-amino-acid chain; its full sequence is Calcium-binding protein K (192 aa).

EF-hand domains follow at residues 60–95 and 96–131; these read WDEASMVRMFTLFDSDGNGVIDVKEFITALYLMAKA and PTLDKLGFFFDLFDSDKSGYLEREEVDKLVNIVVCC. Residues Asp73, Asp75, Asn77, Glu84, Asp109, Asp111, Ser113, Tyr115, and Glu120 each coordinate Ca(2+).

This sequence belongs to the recoverin family.

This chain is Calcium-binding protein K (cbpK), found in Dictyostelium discoideum (Social amoeba).